Consider the following 129-residue polypeptide: Glycine cleavage system H protein (129 aa).

The region spanning 24 to 106 (TYTVGITEHA…YGQGWIFKIK (83 aa)) is the Lipoyl-binding domain. Lysine 65 carries the N6-lipoyllysine modification.

It belongs to the GcvH family. The glycine cleavage system is composed of four proteins: P, T, L and H. It depends on (R)-lipoate as a cofactor.

Its function is as follows. The glycine cleavage system catalyzes the degradation of glycine. The H protein shuttles the methylamine group of glycine from the P protein to the T protein. The protein is Glycine cleavage system H protein of Cronobacter sakazakii (strain ATCC BAA-894) (Enterobacter sakazakii).